A 397-amino-acid polypeptide reads, in one-letter code: Phosphoglycerate kinase (397 aa).

Substrate contacts are provided by residues 25–27 (DLN), R41, 64–67 (HLGR), R118, and R151. ATP contacts are provided by residues K202, E324, and 350 to 353 (GGDT).

It belongs to the phosphoglycerate kinase family. As to quaternary structure, monomer.

It localises to the cytoplasm. The enzyme catalyses (2R)-3-phosphoglycerate + ATP = (2R)-3-phospho-glyceroyl phosphate + ADP. Its pathway is carbohydrate degradation; glycolysis; pyruvate from D-glyceraldehyde 3-phosphate: step 2/5. The sequence is that of Phosphoglycerate kinase from Herminiimonas arsenicoxydans.